An 84-amino-acid chain; its full sequence is uncharacterized protein (84 aa).

The next 3 membrane-spanning stretches (helical) occupy residues 4–20 (AYVL…IKYG), 27–49 (VWKA…WIAF), and 59–81 (IGLA…VYVL).

The protein localises to the cell membrane. This is an uncharacterized protein from Archaeoglobus fulgidus (strain ATCC 49558 / DSM 4304 / JCM 9628 / NBRC 100126 / VC-16).